A 245-amino-acid polypeptide reads, in one-letter code: Probable proteasome subunit alpha type-2 (245 aa).

This sequence belongs to the peptidase T1A family. The 26S proteasome consists of a 20S proteasome core and two 19S regulatory subunits. The 20S proteasome core is composed of 28 subunits that are arranged in four stacked rings, resulting in a barrel-shaped structure. The two end rings are each formed by seven alpha subunits, and the two central rings are each formed by seven beta subunits. The catalytic chamber with the active sites is on the inside of the barrel.

The protein localises to the cytoplasm. It localises to the nucleus. Its function is as follows. The proteasome is a multicatalytic proteinase complex which is characterized by its ability to cleave peptides with Arg, Phe, Tyr, Leu, and Glu adjacent to the leaving group at neutral or slightly basic pH. The proteasome has an ATP-dependent proteolytic activity. The chain is Probable proteasome subunit alpha type-2 (pre8) from Schizosaccharomyces pombe (strain 972 / ATCC 24843) (Fission yeast).